Here is a 266-residue protein sequence, read N- to C-terminus: Undecaprenyl-diphosphatase (266 aa).

8 consecutive transmembrane segments (helical) span residues 2 to 22 (INIL…FLPI), 39 to 59 (LPII…IIYY), 86 to 106 (LKLI…GTFI), 112 to 132 (MFIL…ILML), 145 to 165 (ILLV…PGIS), 184 to 204 (AFEI…LFKY), 212 to 232 (MVLN…VGII), and 246 to 266 (LYYF…FFRI).

Belongs to the UppP family.

It localises to the cell inner membrane. The catalysed reaction is di-trans,octa-cis-undecaprenyl diphosphate + H2O = di-trans,octa-cis-undecaprenyl phosphate + phosphate + H(+). Catalyzes the dephosphorylation of undecaprenyl diphosphate (UPP). Confers resistance to bacitracin. This chain is Undecaprenyl-diphosphatase, found in Borrelia garinii subsp. bavariensis (strain ATCC BAA-2496 / DSM 23469 / PBi) (Borreliella bavariensis).